The chain runs to 243 residues: Protein VERNALIZATION 1 (243 aa).

An MADS-box domain is found at 1–61 (MGRGKVQLKR…GKLYEFATDS (61 aa)). Positions 88 to 178 (QGNWCHEYRK…QKELVEKQKA (91 aa)) constitute a K-box domain. Residues 122 to 178 (LKELQQLEQQLESSLKHIRSRKNQLMHESISELQRKERSLQEENKALQKELVEKQKA) adopt a coiled-coil conformation. The tract at residues 173-243 (VEKQKAHTQQ…PPWMVSHISG (71 aa)) is disordered. A compositionally biased stretch (polar residues) spans 179-192 (HTQQAQWEQTHPQT).

Its subcellular location is the nucleus. Functionally, component of a grass-specific mechanism of vernalization, a process by which prolonged cold exposure provides competence to flower in daylengths longer than 12 hours. Involved in the exit of vernalization and confers flowering competency at the expense of freezing tolerance, probably by promoting the expression of VRN3; this process is essential in cv. Bd29-1 for flowering but seems do not occur in cv. Bd21. In Brachypodium distachyon (Purple false brome), this protein is Protein VERNALIZATION 1.